The following is a 198-amino-acid chain: 3-isopropylmalate dehydratase small subunit (198 aa).

Belongs to the LeuD family. LeuD type 1 subfamily. In terms of assembly, heterodimer of LeuC and LeuD.

The enzyme catalyses (2R,3S)-3-isopropylmalate = (2S)-2-isopropylmalate. The protein operates within amino-acid biosynthesis; L-leucine biosynthesis; L-leucine from 3-methyl-2-oxobutanoate: step 2/4. In terms of biological role, catalyzes the isomerization between 2-isopropylmalate and 3-isopropylmalate, via the formation of 2-isopropylmaleate. This chain is 3-isopropylmalate dehydratase small subunit, found in Colwellia psychrerythraea (strain 34H / ATCC BAA-681) (Vibrio psychroerythus).